Reading from the N-terminus, the 554-residue chain is Urocanate hydratase (554 aa).

NAD(+)-binding positions include 49–50, Gln-127, 173–175, Glu-193, Arg-198, 239–240, 260–264, 270–271, and Tyr-319; these read GG, GMG, NA, QTSAH, and YI. The active site involves Cys-407. Gly-489 provides a ligand contact to NAD(+).

The protein belongs to the urocanase family. Requires NAD(+) as cofactor.

It localises to the cytoplasm. It catalyses the reaction 4-imidazolone-5-propanoate = trans-urocanate + H2O. It functions in the pathway amino-acid degradation; L-histidine degradation into L-glutamate; N-formimidoyl-L-glutamate from L-histidine: step 2/3. In terms of biological role, catalyzes the conversion of urocanate to 4-imidazolone-5-propionate. The polypeptide is Urocanate hydratase (Bacillus velezensis (strain DSM 23117 / BGSC 10A6 / LMG 26770 / FZB42) (Bacillus amyloliquefaciens subsp. plantarum)).